We begin with the raw amino-acid sequence, 121 residues long: Large ribosomal subunit protein uL22 (121 aa).

This sequence belongs to the universal ribosomal protein uL22 family. Part of the 50S ribosomal subunit.

Functionally, this protein binds specifically to 23S rRNA; its binding is stimulated by other ribosomal proteins, e.g. L4, L17, and L20. It is important during the early stages of 50S assembly. It makes multiple contacts with different domains of the 23S rRNA in the assembled 50S subunit and ribosome. Its function is as follows. The globular domain of the protein is located near the polypeptide exit tunnel on the outside of the subunit, while an extended beta-hairpin is found that lines the wall of the exit tunnel in the center of the 70S ribosome. The chain is Large ribosomal subunit protein uL22 from Synechococcus sp. (strain CC9311).